The chain runs to 364 residues: MHFFQSSLVAATMGAALVAAAPAADLETRGSCTFTSTSALKSGKASCSTITLQNIAVPAGETLDLTGLKAGTTVVFDGTTTFGYKEWEGPLISASGTSITIKQNPGAKIDCDGARWWDGKGGNGGKKKPKFFSAHKLNKSNITGLKVYNTPVHGFSIQSDHLTIKDVLLDNSAGTKLGHNTDAFDVGSSTYITIDGATVYNQDDCLAVNSGEHITFTNGYCNGGHGLSIGSVGGRSNNVVNDVTISNSQVINSQNGARIKTVYGATGSVTGVKFQDISLKGITKYGIVVQQDYENGKPTGKPTNGVKVSDITFEKVTGTVTSSATDIYILCGSGSCTNWTWSGNSVTGGKKSSSCKNVPAGASC.

The N-terminal stretch at Met1–Ala20 is a signal peptide. Residues Ala21–Arg29 constitute a propeptide that is removed on maturation. A disulfide bond links Cys32 and Cys47. 2 N-linked (GlcNAc...) asparagine glycosylation sites follow: Asn138 and Asn141. PbH1 repeat units follow at residues Ser159–Ser188, Ser189–Ser210, Gly211–Ser231, Val240–Thr261, Val269–Gln291, and Thr303–Ala324. Asp203 acts as the Proton donor in catalysis. Cysteines 205 and 221 form a disulfide. His225 is an active-site residue. Cysteines 331 and 336 form a disulfide. N-linked (GlcNAc...) asparagine glycosylation is present at Asn338. Cys355 and Cys364 form a disulfide bridge.

Belongs to the glycosyl hydrolase 28 family.

It localises to the secreted. It carries out the reaction (1,4-alpha-D-galacturonosyl)n+m + H2O = (1,4-alpha-D-galacturonosyl)n + (1,4-alpha-D-galacturonosyl)m.. In terms of biological role, involved in maceration and soft-rotting of plant tissue. Hydrolyzes the 1,4-alpha glycosidic bonds of de-esterified pectate in the smooth region of the plant cell wall. This Aspergillus fumigatus (strain CBS 144.89 / FGSC A1163 / CEA10) (Neosartorya fumigata) protein is Probable endopolygalacturonase B (pgaB).